The sequence spans 137 residues: MSAHLQWMVVRNCSSFLIKRNKQTYSTEPNNLKARNSFRYNGLIHRKTVGVEPAADGKGVVVVMKRRSGQRKPATSYVRTTINKNARATLSSIRHMIRKNKYRPDLRMAAIRRASAILRSQKPVMVKRKPSRPTKSS.

The residue at position 2 (Ser-2) is an N-acetylserine. Residues Lys-58 and Lys-65 each participate in a glycyl lysine isopeptide (Lys-Gly) (interchain with G-Cter in SUMO2) cross-link. Position 115 is a phosphoserine (Ser-115).

Belongs to the eukaryotic ribosomal protein eL28 family. As to quaternary structure, component of the large ribosomal subunit.

The protein resides in the cytoplasm. Its function is as follows. Component of the large ribosomal subunit. The ribosome is a large ribonucleoprotein complex responsible for the synthesis of proteins in the cell. The protein is Large ribosomal subunit protein eL28 (RPL28) of Bos taurus (Bovine).